A 561-amino-acid polypeptide reads, in one-letter code: Dihydroxy-acid dehydratase (561 aa).

Cys-50 serves as a coordination point for [2Fe-2S] cluster. Residue Asp-82 participates in Mg(2+) binding. Cys-123 contributes to the [2Fe-2S] cluster binding site. Positions 124 and 125 each coordinate Mg(2+). Lys-125 carries the N6-carboxylysine modification. [2Fe-2S] cluster is bound at residue Cys-195. A Mg(2+)-binding site is contributed by Glu-447. Ser-473 functions as the Proton acceptor in the catalytic mechanism.

This sequence belongs to the IlvD/Edd family. In terms of assembly, homodimer. The cofactor is [2Fe-2S] cluster. It depends on Mg(2+) as a cofactor.

The catalysed reaction is (2R)-2,3-dihydroxy-3-methylbutanoate = 3-methyl-2-oxobutanoate + H2O. It catalyses the reaction (2R,3R)-2,3-dihydroxy-3-methylpentanoate = (S)-3-methyl-2-oxopentanoate + H2O. It functions in the pathway amino-acid biosynthesis; L-isoleucine biosynthesis; L-isoleucine from 2-oxobutanoate: step 3/4. The protein operates within amino-acid biosynthesis; L-valine biosynthesis; L-valine from pyruvate: step 3/4. Functionally, functions in the biosynthesis of branched-chain amino acids. Catalyzes the dehydration of (2R,3R)-2,3-dihydroxy-3-methylpentanoate (2,3-dihydroxy-3-methylvalerate) into 2-oxo-3-methylpentanoate (2-oxo-3-methylvalerate) and of (2R)-2,3-dihydroxy-3-methylbutanoate (2,3-dihydroxyisovalerate) into 2-oxo-3-methylbutanoate (2-oxoisovalerate), the penultimate precursor to L-isoleucine and L-valine, respectively. This is Dihydroxy-acid dehydratase from Chloroflexus aurantiacus (strain ATCC 29366 / DSM 635 / J-10-fl).